The chain runs to 393 residues: Serine/threonine protein kinase AFUB_078980 (393 aa).

The region spanning 61 to 390 is the Protein kinase domain; that stretch reads YQVLSKLGFG…APELLTDPWL (330 aa). ATP-binding positions include 67 to 75 and Lys-90; that span reads LGFGANSTV. Catalysis depends on Asp-190, which acts as the Proton acceptor.

The protein belongs to the protein kinase superfamily. CMGC Ser/Thr protein kinase family.

It carries out the reaction L-seryl-[protein] + ATP = O-phospho-L-seryl-[protein] + ADP + H(+). It catalyses the reaction L-threonyl-[protein] + ATP = O-phospho-L-threonyl-[protein] + ADP + H(+). In terms of biological role, serine/threonine protein kinase; part of the subtelomeric hrmA-associated cluster (HAC) containing genes that alter the hyphal surface (such as reduced total chitin or increased beta-glucan exposure) and perturb inter-hyphal interactions within the developing biofilms, resulting in a loss of vertically aligned polarized growing filaments. Consequently, this hypoxia-typic morphotype (called H-MORPH) with altered biofilm architecture leads to increased hypoxia fitness, increased host inflammation, rapid disease progression, and mortality in a murine model of invasive aspergillosis. The protein is Serine/threonine protein kinase AFUB_078980 of Aspergillus fumigatus (strain CBS 144.89 / FGSC A1163 / CEA10) (Neosartorya fumigata).